Here is a 204-residue protein sequence, read N- to C-terminus: Inactive ribonuclease-like protein 9 (204 aa).

The N-terminal stretch at 1 to 26 (MMRTLITTHPLLLLLLLQQLLQPVQF) is a signal peptide. 3 disulfides stabilise this stretch: Cys-97/Cys-152, Cys-115/Cys-167, and Cys-122/Cys-129. N-linked (GlcNAc...) asparagine glycans are attached at residues Asn-130 and Asn-142.

Belongs to the pancreatic ribonuclease family.

Its subcellular location is the secreted. In terms of biological role, does not exhibit any ribonuclease activity. In Papio anubis (Olive baboon), this protein is Inactive ribonuclease-like protein 9 (RNASE9).